We begin with the raw amino-acid sequence, 339 residues long: Tetraacyldisaccharide 4'-kinase (339 aa).

58–65 is an ATP binding site; that stretch reads TVGGSGKT.

The protein belongs to the LpxK family.

It catalyses the reaction a lipid A disaccharide + ATP = a lipid IVA + ADP + H(+). It participates in glycolipid biosynthesis; lipid IV(A) biosynthesis; lipid IV(A) from (3R)-3-hydroxytetradecanoyl-[acyl-carrier-protein] and UDP-N-acetyl-alpha-D-glucosamine: step 6/6. Transfers the gamma-phosphate of ATP to the 4'-position of a tetraacyldisaccharide 1-phosphate intermediate (termed DS-1-P) to form tetraacyldisaccharide 1,4'-bis-phosphate (lipid IVA). The protein is Tetraacyldisaccharide 4'-kinase of Shewanella baltica (strain OS155 / ATCC BAA-1091).